The sequence spans 493 residues: Ectonucleoside triphosphate diphosphohydrolase 8 (493 aa).

Residues 1–7 (MEYKGKV) are Cytoplasmic-facing. The chain crosses the membrane as a helical span at residues 8–28 (VAGLLTATCVFSIIALILSAV). The Extracellular segment spans residues 29 to 463 (DVKDVFLPPG…ALEHVKGHEP (435 aa)). N-linked (GlcNAc...) asparagine glycosylation is found at Asn65, Asn79, and Asn133. Residues Cys76 and Cys100 are joined by a disulfide bond. Glu166 serves as the catalytic Proton acceptor. Asn223, Asn234, Asn267, Asn324, Asn330, Asn361, Asn372, Asn382, and Asn445 each carry an N-linked (GlcNAc...) asparagine glycan. Cys244 and Cys291 are oxidised to a cystine. A disulfide bridge connects residues Cys327 and Cys333. Cys379 and Cys401 are disulfide-bonded. The chain crosses the membrane as a helical span at residues 464–486 (SLWAGAISFIVLAIVAGLVAILL). At 487–493 (QCFWKSK) the chain is on the cytoplasmic side.

The protein belongs to the GDA1/CD39 NTPase family. Ca(2+) serves as cofactor. The cofactor is Mg(2+). Post-translationally, N-glycosylated.

Its subcellular location is the cell membrane. The enzyme catalyses a ribonucleoside 5'-triphosphate + 2 H2O = a ribonucleoside 5'-phosphate + 2 phosphate + 2 H(+). Canalicular ectonucleoside NTPDase responsible for the main hepatic NTPDase activity. Ectonucleoside ATPases catalyze the hydrolysis of gamma- and beta-phosphate residues of nucleotides, playing a central role in concentration of extracellular nucleotides. This chain is Ectonucleoside triphosphate diphosphohydrolase 8 (ENTPD8), found in Gallus gallus (Chicken).